A 230-amino-acid polypeptide reads, in one-letter code: Cytidylate kinase (230 aa).

An ATP-binding site is contributed by 10-18 (GPAGSGKST).

Belongs to the cytidylate kinase family. Type 1 subfamily.

Its subcellular location is the cytoplasm. It catalyses the reaction CMP + ATP = CDP + ADP. The catalysed reaction is dCMP + ATP = dCDP + ADP. The polypeptide is Cytidylate kinase (Leptospira borgpetersenii serovar Hardjo-bovis (strain L550)).